The following is a 186-amino-acid chain: ATP synthase subunit delta (186 aa).

This sequence belongs to the ATPase delta chain family. F-type ATPases have 2 components, F(1) - the catalytic core - and F(0) - the membrane proton channel. F(1) has five subunits: alpha(3), beta(3), gamma(1), delta(1), epsilon(1). F(0) has three main subunits: a(1), b(2) and c(10-14). The alpha and beta chains form an alternating ring which encloses part of the gamma chain. F(1) is attached to F(0) by a central stalk formed by the gamma and epsilon chains, while a peripheral stalk is formed by the delta and b chains.

Its subcellular location is the cell inner membrane. F(1)F(0) ATP synthase produces ATP from ADP in the presence of a proton or sodium gradient. F-type ATPases consist of two structural domains, F(1) containing the extramembraneous catalytic core and F(0) containing the membrane proton channel, linked together by a central stalk and a peripheral stalk. During catalysis, ATP synthesis in the catalytic domain of F(1) is coupled via a rotary mechanism of the central stalk subunits to proton translocation. Functionally, this protein is part of the stalk that links CF(0) to CF(1). It either transmits conformational changes from CF(0) to CF(1) or is implicated in proton conduction. This Ruegeria pomeroyi (strain ATCC 700808 / DSM 15171 / DSS-3) (Silicibacter pomeroyi) protein is ATP synthase subunit delta.